Consider the following 262-residue polypeptide: Sulfite reductase, dissimilatory-type subunit beta (262 aa).

Positions 151, 188, 189, 193, 231, 258, and 261 each coordinate [4Fe-4S] cluster. C193 contacts siroheme.

Heterohexamer of two alpha, two beta and two gamma subunits. Requires [4Fe-4S] cluster as cofactor. Siroheme is required as a cofactor.

The enzyme catalyses [DsrC protein]-trisulfide + NAD(+) + 3 H2O = [DsrC protein]-dithiol + sulfite + NADH + 3 H(+). In terms of biological role, catalyzes the reduction of sulfite to sulfide. This is the terminal oxidation reaction in sulfate respiration, a process catalyzed by the sulfate-reducing bacteria. This chain is Sulfite reductase, dissimilatory-type subunit beta (dsrB), found in Megalodesulfovibrio gigas (strain ATCC 19364 / DSM 1382 / NCIMB 9332 / VKM B-1759) (Desulfovibrio gigas).